The sequence spans 836 residues: Glutamate receptor ionotropic, kainate 1 (836 aa).

The N-terminal stretch at 1–30 (MERGTVLIQPGLWTRDTSWTLLYFLCYILP) is a signal peptide. Topologically, residues 31–561 (QTSPQVLRIG…VFSFLNPLSP (531 aa)) are extracellular. N-linked (GlcNAc...) asparagine glycans are attached at residues N68, N74, N276, N379, N413, N424, and N431. Residues P516, T518, and R523 each coordinate L-glutamate. N-linked (GlcNAc...) asparagine glycosylation occurs at N546. The chain crosses the membrane as a helical span at residues 562–582 (DIWMYVLLACLGVSCVLFVIA). Topologically, residues 583 to 638 (RFTPYEWYNPHPCNPDSDVVENNFTLLNSFWFGVGALMQQGSELMPKALSTRIVGG) are cytoplasmic. The chain crosses the membrane as a helical span at residues 639-659 (IWWFFTLIIISSYTANLAAFL). The Extracellular portion of the chain corresponds to 660–721 (TVERMESPID…RQPSALGVEN (62 aa)). L-glutamate is bound by residues S689 and T690. Residues 722–742 (IGGIFIVLAAGLVLSVFVAIG) form a helical membrane-spanning segment. Over 743 to 836 (EFIYKSRKNN…RRTQRKETVA (94 aa)) the chain is Cytoplasmic.

It belongs to the glutamate-gated ion channel (TC 1.A.10.1) family. GRIK1 subfamily. In terms of assembly, homotetramer or heterotetramer of pore-forming glutamate receptor subunits. Tetramers may be formed by the dimerization of dimers. Can form functional heteromeric receptors with GRIK4 and GRIK5. Interacts with KLHL17. In terms of tissue distribution, most abundant in the cerebellum. Also present in the suprachiasmatic nuclei of the hypothalamus.

Its subcellular location is the cell membrane. It localises to the postsynaptic cell membrane. It carries out the reaction Ca(2+)(in) = Ca(2+)(out). Ionotropic glutamate receptor that functions as a cation-permeable ligand-gated ion channel, gated by L-glutamate and the glutamatergic agonist kainic acid. L-glutamate acts as an excitatory neurotransmitter at many synapses in the central nervous system. Binding of the excitatory neurotransmitter L-glutamate induces a conformation change, leading to the opening of the cation channel, and thereby converts the chemical signal to an electrical impulse. The receptor then desensitizes rapidly and enters a transient inactive state, characterized by the presence of bound agonist. This Mus musculus (Mouse) protein is Glutamate receptor ionotropic, kainate 1 (Grik1).